Reading from the N-terminus, the 122-residue chain is Neuropeptide B (122 aa).

Positions 1-24 (MAGPAMLVAAALALCLLLASPGLA) are cleaved as a signal peptide. Trp25 carries the 6'-bromotryptophan modification. Positions 56-122 (SEPRGGTRSL…LSLSASDCRK (67 aa)) are excised as a propeptide.

The protein belongs to the neuropeptide B/W family.

The protein localises to the secreted. In terms of biological role, may be involved in the regulation of feeding, neuroendocrine system, memory, learning and in the afferent pain pathway. In Bos taurus (Bovine), this protein is Neuropeptide B (NPB).